Consider the following 372-residue polypeptide: UDP-N-acetylglucosamine--N-acetylmuramyl-(pentapeptide) pyrophosphoryl-undecaprenol N-acetylglucosamine transferase (372 aa).

UDP-N-acetyl-alpha-D-glucosamine contacts are provided by residues 14 to 16, Asn-128, Arg-169, Ser-201, Ile-257, and Gln-302; that span reads TGG.

The protein belongs to the glycosyltransferase 28 family. MurG subfamily.

Its subcellular location is the cell inner membrane. It catalyses the reaction di-trans,octa-cis-undecaprenyl diphospho-N-acetyl-alpha-D-muramoyl-L-alanyl-D-glutamyl-meso-2,6-diaminopimeloyl-D-alanyl-D-alanine + UDP-N-acetyl-alpha-D-glucosamine = di-trans,octa-cis-undecaprenyl diphospho-[N-acetyl-alpha-D-glucosaminyl-(1-&gt;4)]-N-acetyl-alpha-D-muramoyl-L-alanyl-D-glutamyl-meso-2,6-diaminopimeloyl-D-alanyl-D-alanine + UDP + H(+). It participates in cell wall biogenesis; peptidoglycan biosynthesis. Functionally, cell wall formation. Catalyzes the transfer of a GlcNAc subunit on undecaprenyl-pyrophosphoryl-MurNAc-pentapeptide (lipid intermediate I) to form undecaprenyl-pyrophosphoryl-MurNAc-(pentapeptide)GlcNAc (lipid intermediate II). The sequence is that of UDP-N-acetylglucosamine--N-acetylmuramyl-(pentapeptide) pyrophosphoryl-undecaprenol N-acetylglucosamine transferase from Bacteroides thetaiotaomicron (strain ATCC 29148 / DSM 2079 / JCM 5827 / CCUG 10774 / NCTC 10582 / VPI-5482 / E50).